Here is a 647-residue protein sequence, read N- to C-terminus: Protein arginine N-methyltransferase 7 (647 aa).

2 SAM-dependent MTase PRMT-type domains span residues 12 to 332 (EREW…FSLW) and 337 to 647 (GKDK…SEDS). Active-site residues include E140 and E149.

This sequence belongs to the class I-like SAM-binding methyltransferase superfamily. Protein arginine N-methyltransferase family. PRMT7 subfamily.

Its function is as follows. Arginine methyltransferase that can both catalyze the formation of omega-N monomethylarginine (MMA) and symmetrical dimethylarginine (sDMA). The chain is Protein arginine N-methyltransferase 7 (prmt-7) from Caenorhabditis elegans.